Reading from the N-terminus, the 414-residue chain is Stork-head box protein ham-1 (414 aa).

The tract at residues 1–31 (MTYLAVVLNGPKAKNGRKVFDSFLEQNRQMF) is essential for association with cell cortex. The Winged helix Storkhead-box1 domain maps to 93–170 (QQVEQMHFVP…MADHYFVSVP (78 aa)). The tract at residues 282–362 (ECQRKARRRN…SNEEAGSISD (81 aa)) is disordered. A bi-partite nuclear localization signal region spans residues 285–295 (RKARRRNHPRR). The interval 321–327 (PTRRRAR) is nuclear localization signal. Polar residues predominate over residues 332–351 (LRSSTPNNSDSAYSISPPHT).

It localises to the cytoplasm. It is found in the cell cortex. The protein resides in the nucleus. Probable transcription factor. Required for asymmetric cell division in neuroblasts, perhaps acting by regulating spindle positioning and myosin polarization, and thus the position of the cleavage plane. Required to produce daughter cell size asymmetry in neuroblasts undergoing asymmetric cell division, usually giving rise to one precursor cell and one apoptotic cell. Positively modulates expression of the serine/threonine kinase pig-1/MELK during asymmetric division of the Q.a neuroblast. Plays a role in neural fate specification in several dopaminergic lineages, including the hermaphrodite-specific neuron (HSN)/phasmid neuron (PHB), acting in concert with the kinase, ham-1, and the T-box protein tbx-2 and the homeobox protein egl-5. This is Stork-head box protein ham-1 from Caenorhabditis elegans.